Reading from the N-terminus, the 308-residue chain is Serpentine receptor class V-1 (308 aa).

7 consecutive transmembrane segments (helical) span residues 15 to 35 (VSTA…YILF), 46 to 68 (PFFR…STFF), 88 to 108 (VVPI…IIFI), 135 to 155 (LLLI…STDF), 184 to 204 (AMVD…AIFI), 222 to 242 (LALS…CSLL), and 256 to 276 (TMWF…LLAL).

Belongs to the nematode receptor-like protein srv family.

The protein localises to the membrane. This is Serpentine receptor class V-1 (srv-1) from Caenorhabditis elegans.